Reading from the N-terminus, the 550-residue chain is Forkhead box protein N4 (550 aa).

The fork-head DNA-binding region spans 231–327 (KPIYSYSCLI…EEMQKWKRKD (97 aa)). The segment covering 402-411 (LQNQSRLAPS) has biased composition (low complexity). The segment at 402-437 (LQNQSRLAPSSPAPAQTPPLHTVPDMTNSSLPQHPA) is disordered.

In terms of tissue distribution, isoform 1 is expressed mainly in adult thymus. Isoform 2 is detected in adult skin. Isoform 3 is expressed in adult brain and embryo. Prominent expression sites include the olfactory placode, the basal layer of the olfactory epithelium, the neuroepithelium of the developing retina, the germinal zone of the differentiated eye, regions of motoneuron development in the neural tube and periventricular regions of the brain.

It localises to the nucleus. Its function is as follows. Transcription factor essential for neural and some non-neural tissues development. Binds to an 11-bp consensus sequence containing the invariant tetranucleotide 5'-ACGC-3'. During development of the central nervous system, required to specify the amacrine and horizontal cell fates from multipotent retinal progenitors while suppressing the alternative photoreceptor cell fates. Drives commitment of p2 progenitors to the V2b interneuron fates during spinal cord neurogenesis. In development of non-neural tissues, plays an essential role in the specification of the atrioventricular canal. The polypeptide is Forkhead box protein N4 (foxn4) (Danio rerio (Zebrafish)).